Reading from the N-terminus, the 334-residue chain is Putative violet-sensitive opsin (334 aa).

At 1-29 (MGKYFYLYENISKVGPYDGPQYYLAPTWA) the chain is on the extracellular side. N-linked (GlcNAc...) asparagine glycosylation occurs at Asn10. The chain crosses the membrane as a helical span at residues 30 to 54 (FYLQAAFMGFVFFVGTPLNFVVLLA). Residues 55-66 (TAKYKKLRVPLN) are Cytoplasmic-facing. A helical transmembrane segment spans residues 67 to 88 (YILVNITFAGFIFVTFSVSQVF). Topologically, residues 89–106 (LASVRGYYFFGQTLCALE) are extracellular. Cysteines 103 and 179 form a disulfide. A helical membrane pass occupies residues 107–126 (AAVGAVAGLVTSWSLAVLSF). The Cytoplasmic segment spans residues 127-145 (ERYLVICKPFGAFKFGSNH). The helical transmembrane segment at 146-168 (ALAAVIFTWFMGVVRCPPFFGWS) threads the bilayer. Topologically, residues 169–194 (RYIPEGLGCSCGPDWYTNCEEFSCAS) are extracellular. A helical membrane pass occupies residues 195-222 (YSKFLLVTCFICPITIIIFSYSQLLGAL). Over 223–244 (RAVAAQQAESASTQKAEKEVSR) the chain is Cytoplasmic. Residues 245 to 272 (MIIVMVASFVTCYGPYALTAQYYAYSQD) form a helical membrane-spanning segment. At 273-279 (ENKDYRL) the chain is on the extracellular side. The chain crosses the membrane as a helical span at residues 280–301 (VTIPAFFSKSSCVYNPLIYAFM). Lys288 bears the N6-(retinylidene)lysine mark. Over 302 to 334 (NKQFNGCIMEMVFGKKMEEASEVSSKTEVSTDS) the chain is Cytoplasmic.

This sequence belongs to the G-protein coupled receptor 1 family. Opsin subfamily. Phosphorylated on some or all of the serine and threonine residues present in the C-terminal region. In terms of tissue distribution, the three color pigments are found in the cone photoreceptor cells.

The protein localises to the membrane. In terms of biological role, visual pigments are the light-absorbing molecules that mediate vision. They consist of an apoprotein, opsin, covalently linked to cis-retinal. This chain is Putative violet-sensitive opsin, found in Oryzias latipes (Japanese rice fish).